A 134-amino-acid chain; its full sequence is UPF0756 membrane protein YeaL (134 aa).

The next 4 helical transmembrane spans lie at 14 to 34, 51 to 71, 86 to 106, and 110 to 130; these read ALGF…LIIV, LTVG…SGTL, LVAI…ITLM, and PQLV…FRGV.

It belongs to the UPF0756 family.

It is found in the cell membrane. The protein is UPF0756 membrane protein YeaL of Salmonella typhimurium (strain LT2 / SGSC1412 / ATCC 700720).